Here is a 736-residue protein sequence, read N- to C-terminus: Oxysterol-binding protein-related protein 9 (736 aa).

A2 carries the post-translational modification N-acetylalanine. Residues 2-99 (ASIMEGPLSK…WIHALEETIL (98 aa)) form the PH domain. A disordered region spans residues 231 to 367 (KSEQRPSSLP…DRDDDAEAGS (137 aa)). A compositionally biased stretch (low complexity) spans 253–290 (TPTPNSTGSGHSPPSSSLTSPSHVNLSPNTVPEFSYSS). S306, S324, S325, S326, and S329 each carry phosphoserine. Composition is skewed to polar residues over residues 314–329 (SSGSASVLTHSSSGNS) and 336–347 (TESLNSSLSNGT). Position 611 is a phosphoserine (S611).

Belongs to the OSBP family. Heterodimer with OSBPL11. Interacts with OSBPL10. As to expression, widely expressed.

It is found in the late endosome membrane. It localises to the golgi apparatus. Its subcellular location is the trans-Golgi network membrane. It carries out the reaction a 1,2-diacyl-sn-glycero-3-phospho-(1D-myo-inositol 4-phosphate)(out) + a 1,2-diacyl-sn-glycero-3-phospho-L-serine(in) = a 1,2-diacyl-sn-glycero-3-phospho-(1D-myo-inositol 4-phosphate)(in) + a 1,2-diacyl-sn-glycero-3-phospho-L-serine(out). Its function is as follows. Interacts with OSBPL11 to function as lipid transfer proteins. Together they form a heterodimer that localizes at the ER-trans-Golgi membrane contact sites, and exchanges phosphatidylserine (1,2-diacyl-sn-glycero-3-phospho-L-serine, PS) for phosphatidylinositol-4-phosphate (1,2-diacyl-sn-glycero-3-phospho-(1D-myo-inositol 4-phosphate), PI(4)P) between the two organelles, a step that is critical for sphingomyelin synthesis in the Golgi complex. The polypeptide is Oxysterol-binding protein-related protein 9 (OSBPL9) (Homo sapiens (Human)).